The following is a 177-amino-acid chain: Early nodulin-like protein 15 (177 aa).

Positions 1-24 are cleaved as a signal peptide; the sequence is MASSSLLVTIFLCISVFFFSSVNA. Residues 25–129 form the Phytocyanin domain; it reads NEVTVGGKSG…GQKLRLVVIT (105 aa). Cysteine 83 and cysteine 117 are disulfide-bonded. An N-linked (GlcNAc...) asparagine glycan is attached at asparagine 84. Serine 153 carries GPI-anchor amidated serine lipidation. Residues 154-177 constitute a propeptide, removed in mature form; it reads GAAKLAGGFSVVFGLVLGLWAFFF.

It belongs to the early nodulin-like (ENODL) family. In terms of tissue distribution, mostly expressed in seedlings, siliques and flowers, and, to a lower extent, in roots, stems and seeds, but barely in leaves.

The protein resides in the cell membrane. Its function is as follows. May act as a carbohydrate transporter. Required, together with ENODL11, ENODL12, ENODL13, ENODL14 and ENODL15, for male-female communication and pollen tube reception and burst at the synergid cell surface of the female gametophyte. This chain is Early nodulin-like protein 15, found in Arabidopsis thaliana (Mouse-ear cress).